Here is a 4218-residue protein sequence, read N- to C-terminus: MDAVADIVFVSRDYQAQSLATDEISVSRGDLVELISSKASEKSRCFVRMFDSGDSPKEGWVPIDILEFNPTMSSSNGKESGDAEFRKLTILRELVETEEEFSRDLLHVVEKYIKGIDKPVVPRSVRDNKDIIFCNFLQIAEFHNNVLKEGLKCYSNQPNMVAKTFLRLERDFDKHVVYCQNEPLAQDYLGSSPDAKKYFQELSKQLGDDKSLAEHLKLPIQRINDYQLLFKDFIKYSLSLKENVKDLERALELMLSVPSRAYDNRFLSSIEGCRGNIYKLGRLLLHAWCNVVDKEGKAHDRYCFLFKSRILVTKVRKISENRSVFILQNIVKLPLCNIELKADEKQIHLSLKAPEANSFLPIDIKPHGPEAHLTWFNEISSHINQDVTLQEHNADDLKVDASQIASESELILHLPQRAEAHDPNLSVRPSDVAENYFLSKETKERLQHEQQELLKLEQEAIELYKKQQSSKSVSSKTESVEITSSQVKSSSEVRKVVSPPPPPQAQVKEVTPVKVVSSPPPPKEITPAKVATPPPQPQVVTSPVKEVAPPPQPRAVASPAKEVTPSQSEPVKAPSPIKEVRKEVPPSASHSKEVEALVATEIRESLTETRSTVVESGQSSEIREEIVVTEESSLEGKQVVALEREPSPCSIPKIQVYRPVECENPVVTKHKPIELKDIVGYSESLRDGDTAPAGGSPGRQQGYSANITDHASLTIWNNRLANIAGDRSGANQHLQQSGPPPPPIPPNFTRMPGFFQPLPLIAYETTIEILIVKARPPSPPPPPPPTIKRVLVHTESLEQKTQNFFEGIYDAASSDTSLRNAKQKIRSIKSTVLKSKDSTNYAQDTVQKAKARDFLHIFTPPVKKRPIYEIVEEPVNIFELEGDYTESIADDFREPSADFEARGQSVGGMDDYYSGYSRASTRRYETKTRDYDRGTSYDSTVERSQYGISSRRDRSSVDKVEARSSLLATGRTESRAASRAESRAESRASYSVAESRAGIRSSSRLQEDRPLRSVDKPVVVKMLKSVQVEPGETAHFEIQFKDQPGLVTWLKDNKPLEDRLADRITQTAAPMNSYRLDIKNCSETDAGTYTIRAQSASETTTVSAQLAVGQAPGHDETKTNTEPAFLVSLKDAEMIENTLFRFMVKIIGDPKPRVKFYKDEKEILETNDRIQIIRDKDYLGFYELVIADVQKTDAGTYSCKATNKHGEANCEAIATTVEDKNPFGALSGQILPAGEKPVFQWKRNGEEFDPEERFKVLFGEDEDSLALVFQHVKPEDAGIYTCVAQTSTGNISCSAELSVQGAIQTLNREPEKPTLVIEHREANASIGGSAILELQCKGFPKPAVQWKHDGEVIQVDDRHKFMYEDEESMSLVIKNVDTVDAGVYTIEAINELGQDESSINLVVKAPPKIKKITDITCSAGETIKMEIEVEGFPQPTVQVTNNGKDVTAESNVKISSSSIGKSLEKVVVEVKEIKLSQAGNYSIKATNDLSQTSEYWSCTVKSKPVIVKNFESEYIHGEKENVQMTVRIDAYPEAKLTWYHDETEIKITDSKYTVSSDGNAYTLKITGATRVDAGKYTVKATNEHGSATSSTQLLIKCAPEFTHKLKNITVAEGDSNVELVVGVDAYPRPHAKWYIDGIEIDEKRNDFRHVEEGNDFKLIMNQVATNMQGNYTCKIMNDYGKLEDNCVVTVNCKPKVKRGLKNVEVQEGKSFTLEVEVYSEPEAKIKWFKDGHEIYEDARIKISRDTQRIENYYLTLNLARTEDAGTYEMKATNFIGETTSTCKVAVLTSEALSLEQTVTKTLIATTEEPEEGAVPEIVHVDVFQQHSYESVPLKYEVIATGIPKPEAIWYHDGKPITPDKHTAITVDGDHYKLEVQSLDLVDAGEYKVVVQNKVGEKSHQGELSLSGIAEYRKPILTQGPGLKDIKVNKGDKVCEPVVFTADPAPEIVLLKDGQPVVETNNVKLKVDKKDAENGLVQYTCTLNILEAEIKDSGRYELKVKNKYGELVTSGWIDVLAKPEISGLNDTKCLPGDTICFEALVQANPKPKVSWTRGNENLCNHENCEVIADVDADKYRLVFQSVSPCEDGKYTITATNSEGRAAVDFNLAVLVEKPTFIVQPESQSIHDYRPVSTKVLVHGVPLPTIEWFKDDKPINYEAINKPGKDKLYAKEDTKKGTDQIESVLDIKSFRENDVGAYTCVATNEIGVTKAPFKLAMLSLAPSFVKKLDNALDVLQGEPLVLECCVDGSPLPTVQWLKDGDEVKPSESIKISTNPDGLVKLEINSCQPNDSGAYKLIISNPHGEKVALCAVAVKPEEMQPKFLKPITSQTVVVGEPLKLEAQVTGFPAPEVKWYKDGMLLRPSPEINFINSPNGQIGLIIDAAQPLDAGVYKCLIANKGGEIEGVSKVEIVPKESKPVFVAELQDASSIEGFPVKMDIKVVGNPKPKLQWFHNGHEIKPDASHIAIVENPDNSSSLIIEKTAPGDSGLYEVIAQNPEGSTASKAKLYVAPKADETATEEAPQFVSALRDVNADEGQELVLSAPFISNPMPEVIWSKDGVTLTPNERLLMTCDGKHIGLTIKPAEAADSGNYTCLLANPLGEDSSACNANVRKVYKPPVFTQKISDQQQVFGNNAKIPVTVSGVPYPDLEWYFQDKPIPKSEKYSIKNDGDHHMLIVNNCEKGDQGVYKCIASNREGKDITQGRLDIVNEIKKHSRSEPPVFLKKIGDCDIYEGMVAKFTACATGYPEPEVEWFKNDQKLFPSDRFLIDIEPNGLLRLTIKNVTEYDVGRYSCRIFNPYGDDICHAELFYDSLDSQQKPLEDQYTDFKKYKKSGAPPPLSEGPIISRMTDRGLLLSWNPSVPLTPRYPITYQIEMMDLPEGDWRTLRTGVRSCACDIRNLEPFRDYRFRVRVENKFGVSDPSPYTQTYRQKLVPDPPKTYTYLPPGTDFRPETSPYFPKDFDIERPPHDGLAQAPQFLLREQDISYGVKDHNTELMWFVYGYPKPKMTYYFDDMLIESGGRFDQSYTRNGQATLFINKMLDRDVGWYEAVATNEHGEARQRVRLEIAEHPRFLKRPDETFIMARKNGRIEAKLVGIPLPEVHWFKDWKPIVDSSRIKISSYDPDIYVLSIHDSIIKDGGLYSISARNIAGSISTSVTVHIEENEDQYIYKTYGRHPYVRSKQLRYQDKYDIGDELGRGTQGITYHAVERSSGDNYAAKIMYGRPELRPFMLNELEMMNTFNHKNLIRPYDAYDTDRSVTLIMELAAGGELVRDNLLRRDYYTERDIAHYIRQTLWGLEHMHEMGVGHMGLTIKDLLISVVGGDIIKVSDFGLSRKINRHNLSTLDYGMPEFVSPEVVNKEGVNFSHDMWTVGLITYVLLGGHNPFLGIDDRETLTKIREGRWDFKDEIWTHISDDGRDFISRLLLYSPEERMDVKTALKHPWFFMLDRPVYDHDYQIGTDRLRNYYDHFRDWYANASCKNYFRRRRLSGCFQHPSKMVYPPGHVYTPENTPEPLPEPRIRAKREEVVSKYLHPDYELGLIQSESHYQYGPDTYLLQLRDVNFPVRLREYMKVAHRRSPSFALNDSVDWSLPVIRERRRFTDIMDEEIDDERTRSRISMYAANESYSIRRLRTELGPRLDEYTEADAMIETQREGYPPFFREKPQTIAITENQPSHIHCFAVGDPKPCVQWFKNDMVLTESKRIKISVDEDGRSILRFEPALHFDVGVYKVVARNKVGQTVARCRIVVATLPDAPDSPEISANSGTEILLRWKQPRDDGHSTVLCYSLQYKLSNCDAWTTVADNIDHEFYLLHDLQPNTNYQFRLASKNRIGWSEMGIPVSASTVGGDAPKIHITKAMKHLQQLTENGHQVVPEEERVHTDYHCEREPPNWVTDSSVSDKYSFISEIARGEFSTIVKGIQKSTDTVVVAKILEVTDENEDNVVAEFDNFKTLRHERIPALFSAYKPLNVPIAIFVMEKLQGADVLTYFSSRHEYSEQMVATVVTQLLDALQYLHWRGYCHLNIQPDNVVMASVRSIQVKLVDFGSAKKVNKLGMKVTPCGSLDFQPPEMINDEPIFPQSDIWSLGALTYLLLSGCSPFRGADEYETKQNISFVRYRFENLFKEVTPEATRFIMLLFKRHPTKRPYTEDCLEHRWLMSSDYMVRKRERAIFLGSRLKTFCDEYHDLKNASATSSKVLNTVAGGPTPTQLLRSNSIQEELLTTF.

An SH3 domain is found at 3-71; sequence AVADIVFVSR…PIDILEFNPT (69 aa). In terms of domain architecture, DH spans 86 to 264; sequence RKLTILRELV…LSVPSRAYDN (179 aa). Residues 439-466 adopt a coiled-coil conformation; the sequence is SKETKERLQHEQQELLKLEQEAIELYKK. 4 disordered regions span residues 465–592, 684–703, 728–750, and 923–1010; these read KKQQ…SHSK, SLRD…QQGY, SGAN…NFTR, and RYET…EDRP. Composition is skewed to low complexity over residues 466-490 and 505-517; these read KQQS…VKSS and AQVK…KVVS. The span at 578–592 shows a compositional bias: basic and acidic residues; it reads KEVRKEVPPSASHSK. Positions 923–935 are enriched in basic and acidic residues; it reads RYETKTRDYDRGT. Residues 936-948 show a composition bias toward polar residues; it reads SYDSTVERSQYGI. Basic and acidic residues-rich tracts occupy residues 950–962 and 972–986; these read SRRD…KVEA and TESR…RAES. Over residues 987–996 the composition is skewed to low complexity; the sequence is RASYSVAESR. Ig-like C2-type domains lie at 1017–1103, 1152–1298, 1313–1400, 1504–1594, 1599–1689, 1694–1785, 1815–1906, 2018–2107, 2113–2214, 2220–2305, 2318–2409, 2415–2505, 2519–2609, 2614–2698, and 2716–2792; these read PVVV…TTVS, PRVK…AELS, PTLV…SSIN, PVIV…TQLL, PEFT…CVVT, PKVK…CKVA, PEIV…LSLS, PEIS…FNLA, PTFI…FKLA, PSFV…EKVA, PKFL…VEIV, PVFV…AKLY, PQFV…ANVR, PPVF…KDIT, and PPVF…SCRI. Cysteines 1199 and 1282 form a disulfide. A disulfide bridge links Cys-2739 with Cys-2790. The Fibronectin type-III 1 domain occupies 2832–2933; that stretch reads APPPLSEGPI…TYRQKLVPDP (102 aa). Positions 3186-3440 constitute a Protein kinase 1 domain; sequence YDIGDELGRG…VKTALKHPWF (255 aa). Gly-3198, Lys-3215, Glu-3260, Ala-3262, Glu-3266, Lys-3310, and Asp-3326 together coordinate ATP. An Ig-like C2-type 16 domain is found at 3654 to 3738; it reads PFFREKPQTI…ARNKVGQTVA (85 aa). Residues 3750–3843 enclose the Fibronectin type-III 2 domain; that stretch reads APDSPEISAN…IPVSASTVGG (94 aa). Residues 3897–4151 enclose the Protein kinase 2 domain; the sequence is YSFISEIARG…TEDCLEHRWL (255 aa).

Belongs to the protein kinase superfamily. CAMK Ser/Thr protein kinase family. As to quaternary structure, interacts with myosin. May interact (via protein kinase domain 1) with ball. May interact (via protein kinase domain 1 or 2) with mask. May interact (via protein kinase domain 2) with Tm1/tropomyosin-1. In terms of tissue distribution, expressed in the thoracic muscles including the indirect flight muscles (IFM) (at protein level).

Its subcellular location is the cytoplasm. It is found in the myofibril. The protein resides in the sarcomere. It localises to the m line. Functionally, structural component of the muscle M line which is involved in assembly and organization of sarcomere. Required for the development and organization of indirect flight muscle sarcomeres by regulating the formation of M line and H zone and the correct assembly of thick and thin filaments in the sarcomere. Lacks serine/threonine-protein kinase activity. The polypeptide is Protein Obscurin (Drosophila melanogaster (Fruit fly)).